The primary structure comprises 151 residues: Large ribosomal subunit protein bL9 (151 aa).

This sequence belongs to the bacterial ribosomal protein bL9 family.

Binds to the 23S rRNA. This chain is Large ribosomal subunit protein bL9, found in Francisella philomiragia subsp. philomiragia (strain ATCC 25017 / CCUG 19701 / FSC 153 / O#319-036).